Here is a 402-residue protein sequence, read N- to C-terminus: Acetylornithine aminotransferase (402 aa).

Pyridoxal 5'-phosphate-binding positions include 117–118 and phenylalanine 143; that span reads GA. Arginine 146 lines the N(2)-acetyl-L-ornithine pocket. 231-234 provides a ligand contact to pyridoxal 5'-phosphate; sequence DEVQ. Lysine 260 is subject to N6-(pyridoxal phosphate)lysine. Threonine 288 contributes to the N(2)-acetyl-L-ornithine binding site. Threonine 289 is a pyridoxal 5'-phosphate binding site.

This sequence belongs to the class-III pyridoxal-phosphate-dependent aminotransferase family. ArgD subfamily. Homodimer. It depends on pyridoxal 5'-phosphate as a cofactor.

Its subcellular location is the cytoplasm. The enzyme catalyses N(2)-acetyl-L-ornithine + 2-oxoglutarate = N-acetyl-L-glutamate 5-semialdehyde + L-glutamate. The protein operates within amino-acid biosynthesis; L-arginine biosynthesis; N(2)-acetyl-L-ornithine from L-glutamate: step 4/4. The sequence is that of Acetylornithine aminotransferase from Corynebacterium efficiens (strain DSM 44549 / YS-314 / AJ 12310 / JCM 11189 / NBRC 100395).